The sequence spans 92 residues: Small ribosomal subunit protein uS19 (92 aa).

Belongs to the universal ribosomal protein uS19 family.

Its function is as follows. Protein S19 forms a complex with S13 that binds strongly to the 16S ribosomal RNA. The chain is Small ribosomal subunit protein uS19 from Caulobacter sp. (strain K31).